The following is a 192-amino-acid chain: Transmembrane protein 276 (192 aa).

The N-terminal stretch at 1 to 32 is a signal peptide; the sequence is MVSKPRTEWSTVLSHLVLAGVSLHAAVSSVQS. The next 4 helical transmembrane spans lie at 35–55, 63–83, 92–112, and 114–134; these read GAAAGFLLQTFAAIIMLAPGP, AGAWVATVIGLPLLAFDFHWV, LLLGGGMVLAVAGDHLGPEGC, and VAGQAVLLVVAVTILIVAVFT.

Its subcellular location is the membrane. The protein is Transmembrane protein 276 of Mus musculus (Mouse).